The sequence spans 131 residues: Peptide methionine sulfoxide reductase MsrB (131 aa).

In terms of domain architecture, MsrB spans 8-130 (LDTWREELTD…NSLSLKLVPR (123 aa)). Zn(2+) is bound by residues C47, C50, C96, and C99. Catalysis depends on C119, which acts as the Nucleophile.

Belongs to the MsrB Met sulfoxide reductase family. It depends on Zn(2+) as a cofactor.

The catalysed reaction is L-methionyl-[protein] + [thioredoxin]-disulfide + H2O = L-methionyl-(R)-S-oxide-[protein] + [thioredoxin]-dithiol. This is Peptide methionine sulfoxide reductase MsrB from Ectopseudomonas mendocina (strain ymp) (Pseudomonas mendocina).